The sequence spans 349 residues: tRNA N6-adenosine threonylcarbamoyltransferase (349 aa).

The Fe cation site is built by His-117 and His-121. Substrate contacts are provided by residues 139–143 (QVSGG), Asp-172, Gly-185, Asp-189, and Asn-278. Asp-310 contacts Fe cation.

Belongs to the KAE1 / TsaD family. Fe(2+) is required as a cofactor.

The protein resides in the cytoplasm. It carries out the reaction L-threonylcarbamoyladenylate + adenosine(37) in tRNA = N(6)-L-threonylcarbamoyladenosine(37) in tRNA + AMP + H(+). Required for the formation of a threonylcarbamoyl group on adenosine at position 37 (t(6)A37) in tRNAs that read codons beginning with adenine. Is involved in the transfer of the threonylcarbamoyl moiety of threonylcarbamoyl-AMP (TC-AMP) to the N6 group of A37, together with TsaE and TsaB. TsaD likely plays a direct catalytic role in this reaction. This chain is tRNA N6-adenosine threonylcarbamoyltransferase, found in Lactobacillus acidophilus (strain ATCC 700396 / NCK56 / N2 / NCFM).